The chain runs to 358 residues: Trace amine-associated receptor 7d (358 aa).

Residues 1–47 (MRVDDDRFPWDQDSILSRDLLSASSLQLCYENLNRSCVRSPYSPGPR) lie on the Extracellular side of the membrane. Asparagine 34 is a glycosylation site (N-linked (GlcNAc...) asparagine). Disulfide bonds link cysteine 37-cysteine 201 and cysteine 120-cysteine 205. Residues 48 to 68 (LILYAVFGFGAVLAVCGNLMV) form a helical membrane-spanning segment. Over 69–83 (MTSILHFRQLHSPAN) the chain is Cytoplasmic. Residues 84 to 104 (FLVASLACADFLVGLTVMPFS) form a helical membrane-spanning segment. The Extracellular portion of the chain corresponds to 105–122 (MVRSVEGCWYFGDTYCKL). A helical membrane pass occupies residues 123–143 (HTCFDVSFCYCSLFHLCFISV). Residues 144–166 (DRYIAVSDPLIYPTRFTASVSGK) lie on the Cytoplasmic side of the membrane. A helical membrane pass occupies residues 167–187 (CITFSWLLSIIYGFPLIYTGA). Over 188-212 (SEAGLEDLVSALTCVGGCQIPMNQK) the chain is Extracellular. Residues 213-233 (FVLINFLLFLVPTLVMMTVYS) traverse the membrane as a helical segment. At 234-274 (KIFLIARQQAQNIEKMRKQTARASESYKDRVCKRERKAAKT) the chain is on the cytoplasmic side. The chain crosses the membrane as a helical span at residues 275–295 (LGIAVAAFLLSWLPYFIDSII). The Extracellular segment spans residues 296–309 (DAFLGFITPTYVYE). Residues 310–333 (ILIWIVYYNSSMNPLIYAFFYPWF) traverse the membrane as a helical segment. Residues 334-358 (RKATKLIVTGKILRENSSTINLFPE) are Cytoplasmic-facing.

Belongs to the G-protein coupled receptor 1 family.

The protein localises to the cell membrane. In terms of biological role, olfactory receptor specific for N,N-dimethylalkylamines trace amines, such as N,N-dimethylcyclohexylamine. Trace amine compounds are enriched in animal body fluids and act on trace amine-associated receptors (TAARs) to elicit both intraspecific and interspecific innate behaviors. Ligand-binding causes a conformation change that triggers signaling via G(s)-class of G alpha proteins (GNAL or GNAS). In Rattus norvegicus (Rat), this protein is Trace amine-associated receptor 7d.